The following is a 626-amino-acid chain: Glyco-Gag protein (626 aa).

Over L1–P67 the chain is Cytoplasmic. A helical transmembrane segment spans residues V68 to S86. Residues E87–D626 are Extracellular-facing. The N-linked (GlcNAc...) asparagine; by host glycan is linked to N113. Pro residues-rich tracts occupy residues P199 to T212 and D249 to P261. The segment at P199 to R306 is disordered. An N-linked (GlcNAc...) asparagine; by host glycan is attached at N480. Composition is skewed to basic and acidic residues over residues R522–R554 and R574–K607. A disordered region spans residues R522–D626. Residues D590–K607 form a CCHC-type zinc finger.

Post-translationally, glycosylated by host. Cleaved by host near the middle of the molecule, releasing the c-terminal half containing capsid and nucleoprotein domains op GAG.

It is found in the host cell membrane. Its function is as follows. Plays a role in viral particle release. Presumably acts by facilitating the fission of the virion bud at the cell surface. May prevent the antiviral activity of murine APOBEC3. The chain is Glyco-Gag protein from Mus musculus (Mouse).